Reading from the N-terminus, the 351-residue chain is Protein Maqu_2141 (351 aa).

This sequence belongs to the proline racemase family.

Displays neither proline racemase activity nor trans-4-hydroxy-L-proline (t4LHyp) epimerase activity nor t3LHyp dehydratase activity. In Marinobacter nauticus (strain ATCC 700491 / DSM 11845 / VT8) (Marinobacter aquaeolei), this protein is Protein Maqu_2141.